Reading from the N-terminus, the 547-residue chain is MDIKNDIRNISNLLDDDILCDVIITIGDGEEIKAHKTILAAGSTYFKTMFTTPMIARDLVTRVNLQMFDKDVVKNIVQYLYNRHISSMNVIDVLKCADYLLINDLVTNCESYIKDYINHDIYHKLYEMVHIPIVKYIKRMLISNIPTLITTNAFKKTVFEILFDIISTNDSVYLYREGYKVTILLKWLEYNYITEEQLLCILSCIDIQNLDKKSRLLLYSNKTINMHPSCIQFLLDNKQNRNIIPHQLCLACHDTNYNVCNPCIVVYNINTMEYSVISTIPNHIINYASAIVDNDIIIARGYNFNNPSLNKVYKINIENKIHVELPPIIKNRCRFSLAVIDDTIYAIGGQNGTNVERTIECYTMGDDKWKMLPNMPIALSSYGMCVLDQYIYIIGGRTQHIDYTSVHTVNSIDMEEDTNISNKVMRYDTVNNIWETLPNFWTGTINPGVVSHKDDIYVVCDIKDEKNVKTCIFRYNTNTYNGWELVTTTESRLSALHTILYNNTIMMLHCYESYMLQDTFNVYTREWNHMCHQHSNSYIMYNILPIY.

The region spanning 20–89 (CDVIITIGDG…LYNRHISSMN (70 aa)) is the BTB domain. Kelch repeat units lie at residues 295–342 (DIII…VIDD), 343–389 (TIYA…VLDQ), and 391–454 (IYII…SHKD).

In terms of assembly, interacts (via BTB domain) with host CUL3.

The protein localises to the host cytoplasm. Functionally, probable substrate-specific adapter of CUL3-containing E3 ubiquitin-protein ligases which mediate the ubiquitination and subsequent proteasomal degradation of host target proteins. The polypeptide is Kelch repeat and BTB domain-containing protein 2 (KBTB2) (Bos taurus (Bovine)).